Consider the following 925-residue polypeptide: Protein translocase subunit SecA (925 aa).

ATP-binding positions include Gln87, 105 to 109, and Asp515; that span reads GEGKT. Cys909, Cys911, Cys920, and His921 together coordinate Zn(2+).

The protein belongs to the SecA family. In terms of assembly, monomer and homodimer. Part of the essential Sec protein translocation apparatus which comprises SecA, SecYEG and auxiliary proteins SecDF-YajC and YidC. Zn(2+) is required as a cofactor.

It is found in the cell inner membrane. Its subcellular location is the cytoplasm. The enzyme catalyses ATP + H2O + cellular proteinSide 1 = ADP + phosphate + cellular proteinSide 2.. Its function is as follows. Part of the Sec protein translocase complex. Interacts with the SecYEG preprotein conducting channel. Has a central role in coupling the hydrolysis of ATP to the transfer of proteins into and across the cell membrane, serving both as a receptor for the preprotein-SecB complex and as an ATP-driven molecular motor driving the stepwise translocation of polypeptide chains across the membrane. The protein is Protein translocase subunit SecA of Cupriavidus taiwanensis (strain DSM 17343 / BCRC 17206 / CCUG 44338 / CIP 107171 / LMG 19424 / R1) (Ralstonia taiwanensis (strain LMG 19424)).